The sequence spans 290 residues: 4-hydroxy-tetrahydrodipicolinate synthase (290 aa).

Thr-44 contacts pyruvate. Tyr-132 acts as the Proton donor/acceptor in catalysis. Lys-160 acts as the Schiff-base intermediate with substrate in catalysis. Ile-202 is a binding site for pyruvate.

It belongs to the DapA family. Homotetramer; dimer of dimers.

The protein resides in the cytoplasm. The enzyme catalyses L-aspartate 4-semialdehyde + pyruvate = (2S,4S)-4-hydroxy-2,3,4,5-tetrahydrodipicolinate + H2O + H(+). It functions in the pathway amino-acid biosynthesis; L-lysine biosynthesis via DAP pathway; (S)-tetrahydrodipicolinate from L-aspartate: step 3/4. Functionally, catalyzes the condensation of (S)-aspartate-beta-semialdehyde [(S)-ASA] and pyruvate to 4-hydroxy-tetrahydrodipicolinate (HTPA). This Geobacter metallireducens (strain ATCC 53774 / DSM 7210 / GS-15) protein is 4-hydroxy-tetrahydrodipicolinate synthase.